A 358-amino-acid polypeptide reads, in one-letter code: Stearoyl-CoA desaturase 2 (358 aa).

Residues 1–71 lie on the Cytoplasmic side of the membrane; the sequence is MPAHILQEIS…EGPPPKLEYV (71 aa). The interval 16 to 39 is disordered; that stretch reads TTTITAPPSGGQQNGGEKFEKSSH. Residues 72 to 92 form a helical membrane-spanning segment; that stretch reads WRNIILMALLHLGALYGITLV. N74 is a binding site for substrate. Residues 93 to 96 are Lumenal-facing; sequence PSCK. The chain crosses the membrane as a helical span at residues 97–117; that stretch reads LYTCLFAYLYYVISALGITAG. Residues 118 to 216 are Cytoplasmic-facing; the sequence is AHRLWSHRTY…EKLVMFQRRY (99 aa). Residues H119 and H124 each coordinate Fe cation. Residues 119 to 124 carry the Histidine box-1 motif; it reads HRLWSH. Residues N147, R154, and D155 each contribute to the substrate site. Residues H156, H159, and H160 each coordinate Fe cation. Residues 156 to 160 carry the Histidine box-2 motif; it reads HRAHH. 2 residues coordinate substrate: R187 and K188. The chain crosses the membrane as a helical span at residues 217-236; that stretch reads YKPGLLLMCFVLPTLVPWYC. At 237–240 the chain is on the lumenal side; sequence WGET. A helical membrane pass occupies residues 241 to 262; the sequence is FVNSLCVSTFLRYAVVLNATWL. W261 serves as a coordination point for substrate. Residues 263–358 lie on the Cytoplasmic side of the membrane; that stretch reads VNSAAHLYGY…RTGDGSCKSG (96 aa). Fe cation is bound by residues H268, H297, H300, and H301. Residues 297–301 carry the Histidine box-3 motif; that stretch reads HNYHH.

It belongs to the fatty acid desaturase type 1 family. Requires Fe(2+) as cofactor. Detected in brain and skin. Highly expressed in brain, and detected at low levels in heart, stomach, lung and testis. Detected both in dermis and epidermis.

Its subcellular location is the endoplasmic reticulum membrane. It localises to the microsome membrane. It catalyses the reaction octadecanoyl-CoA + 2 Fe(II)-[cytochrome b5] + O2 + 2 H(+) = (9Z)-octadecenoyl-CoA + 2 Fe(III)-[cytochrome b5] + 2 H2O. It carries out the reaction hexadecanoyl-CoA + 2 Fe(II)-[cytochrome b5] + O2 + 2 H(+) = (9Z)-hexadecenoyl-CoA + 2 Fe(III)-[cytochrome b5] + 2 H2O. In terms of biological role, stearoyl-CoA desaturase that utilizes O(2) and electrons from reduced cytochrome b5 to introduce the first double bond into saturated fatty acyl-CoA substrates. Catalyzes the insertion of a cis double bond at the delta-9 position into fatty acyl-CoA substrates including palmitoyl-CoA and stearoyl-CoA. Gives rise to a mixture of 16:1 and 18:1 unsaturated fatty acids. Contributes to the biosynthesis of membrane phospholipids, cholesterol esters and triglycerides, especially during embryonic development and in neonates. Important for normal permeability barrier function of the skin in neonates. This chain is Stearoyl-CoA desaturase 2 (Scd2), found in Mus musculus (Mouse).